Consider the following 316-residue polypeptide: ATP synthase gamma chain (316 aa).

It belongs to the ATPase gamma chain family. In terms of assembly, F-type ATPases have 2 components, CF(1) - the catalytic core - and CF(0) - the membrane proton channel. CF(1) has five subunits: alpha(3), beta(3), gamma(1), delta(1), epsilon(1). CF(0) has three main subunits: a, b and c.

It localises to the cellular thylakoid membrane. In terms of biological role, produces ATP from ADP in the presence of a proton gradient across the membrane. The gamma chain is believed to be important in regulating ATPase activity and the flow of protons through the CF(0) complex. This chain is ATP synthase gamma chain, found in Prochlorococcus marinus (strain MIT 9312).